A 141-amino-acid polypeptide reads, in one-letter code: uncharacterized protein (141 aa).

The segment covering 1-39 (MNNNNNNNNNNNNNNNNNNNNNNNNNSYDSNHSSSSYTS) has biased composition (low complexity). Positions 1–48 (MNNNNNNNNNNNNNNNNNNNNNNNNNSYDSNHSSSSYTSENQNREQQF) are disordered. The helical transmembrane segment at 109-129 (FFCKIILVFICLVAIYSLVVI) threads the bilayer.

It localises to the membrane. This is an uncharacterized protein from Dictyostelium discoideum (Social amoeba).